The chain runs to 321 residues: tRNA(Ile)-lysidine synthase (321 aa).

21–26 provides a ligand contact to ATP; that stretch reads SYGSDS.

The protein belongs to the tRNA(Ile)-lysidine synthase family.

Its subcellular location is the cytoplasm. The enzyme catalyses cytidine(34) in tRNA(Ile2) + L-lysine + ATP = lysidine(34) in tRNA(Ile2) + AMP + diphosphate + H(+). In terms of biological role, ligates lysine onto the cytidine present at position 34 of the AUA codon-specific tRNA(Ile) that contains the anticodon CAU, in an ATP-dependent manner. Cytidine is converted to lysidine, thus changing the amino acid specificity of the tRNA from methionine to isoleucine. This is tRNA(Ile)-lysidine synthase from Campylobacter jejuni (strain RM1221).